Here is a 402-residue protein sequence, read N- to C-terminus: Phosphoglycerate kinase (402 aa).

Substrate-binding positions include 24-26, Arg-40, 63-66, Arg-122, and Arg-155; these read DFN and HFGR. Residues Lys-206, Gly-297, Glu-328, and 358–361 each bind ATP; that span reads GGDS.

It belongs to the phosphoglycerate kinase family. Monomer.

It is found in the cytoplasm. The enzyme catalyses (2R)-3-phosphoglycerate + ATP = (2R)-3-phospho-glyceroyl phosphate + ADP. It functions in the pathway carbohydrate degradation; glycolysis; pyruvate from D-glyceraldehyde 3-phosphate: step 2/5. The polypeptide is Phosphoglycerate kinase (Prochlorococcus marinus (strain MIT 9301)).